The primary structure comprises 83 residues: Exodeoxyribonuclease 7 small subunit (83 aa).

This sequence belongs to the XseB family. Heterooligomer composed of large and small subunits.

The protein localises to the cytoplasm. The enzyme catalyses Exonucleolytic cleavage in either 5'- to 3'- or 3'- to 5'-direction to yield nucleoside 5'-phosphates.. In terms of biological role, bidirectionally degrades single-stranded DNA into large acid-insoluble oligonucleotides, which are then degraded further into small acid-soluble oligonucleotides. The sequence is that of Exodeoxyribonuclease 7 small subunit from Allorhizobium ampelinum (strain ATCC BAA-846 / DSM 112012 / S4) (Agrobacterium vitis (strain S4)).